Consider the following 529-residue polypeptide: Peptide chain release factor 3 (529 aa).

Positions 11–280 constitute a tr-type G domain; the sequence is AKRRTFAIIS…GLVEWAPAPM (270 aa). GTP is bound by residues 20–27, 88–92, and 142–145; these read SHPDAGKT, DTPGH, and NKLD.

The protein belongs to the TRAFAC class translation factor GTPase superfamily. Classic translation factor GTPase family. PrfC subfamily.

Its subcellular location is the cytoplasm. Increases the formation of ribosomal termination complexes and stimulates activities of RF-1 and RF-2. It binds guanine nucleotides and has strong preference for UGA stop codons. It may interact directly with the ribosome. The stimulation of RF-1 and RF-2 is significantly reduced by GTP and GDP, but not by GMP. This Yersinia enterocolitica serotype O:8 / biotype 1B (strain NCTC 13174 / 8081) protein is Peptide chain release factor 3.